The sequence spans 158 residues: UPF0758 protein VC_1786 (158 aa).

One can recognise an MPN domain in the interval 37–158; the sequence is TFARTENTTE…SVSFAERGWL (122 aa). The Zn(2+) site is built by H108, H110, and D121. The short motif at 108–121 is the JAMM motif element; that stretch reads HNHPSGDPEPSQAD.

Belongs to the UPF0758 family.

The chain is UPF0758 protein VC_1786 from Vibrio cholerae serotype O1 (strain ATCC 39315 / El Tor Inaba N16961).